The chain runs to 132 residues: Replication enhancer protein (132 aa).

It belongs to the geminiviridae replication enhancer protein family. As to quaternary structure, homooligomer. Interacts with the replication-associated protein (REP). Interacts with host proliferating cell nuclear antigen (PCNA). Interacts with host retinoblastoma-related protein 1 (RBR1), and may thereby deregulate the host cell cycle. Oligomerization and interaction with PCNA are necessary for optimal replication enhancement.

In terms of biological role, increases viral DNA accumulation. Enhances infectivity and symptom expression. This Macroptilium lathyroides (Lima bean) protein is Replication enhancer protein.